The primary structure comprises 283 residues: Thymidylate synthase (283 aa).

Position 22 (arginine 22) interacts with dUMP. Residue cysteine 160 is the Nucleophile of the active site. DUMP contacts are provided by residues 180-183 (RSCD), asparagine 191, and 221-223 (HIY). Aspartate 183 contributes to the (6R)-5,10-methylene-5,6,7,8-tetrahydrofolate binding site. Position 282 (serine 282) interacts with (6R)-5,10-methylene-5,6,7,8-tetrahydrofolate.

The protein belongs to the thymidylate synthase family. Bacterial-type ThyA subfamily. Homodimer.

The protein localises to the cytoplasm. The catalysed reaction is dUMP + (6R)-5,10-methylene-5,6,7,8-tetrahydrofolate = 7,8-dihydrofolate + dTMP. The protein operates within pyrimidine metabolism; dTTP biosynthesis. Catalyzes the reductive methylation of 2'-deoxyuridine-5'-monophosphate (dUMP) to 2'-deoxythymidine-5'-monophosphate (dTMP) while utilizing 5,10-methylenetetrahydrofolate (mTHF) as the methyl donor and reductant in the reaction, yielding dihydrofolate (DHF) as a by-product. This enzymatic reaction provides an intracellular de novo source of dTMP, an essential precursor for DNA biosynthesis. The polypeptide is Thymidylate synthase (Actinobacillus succinogenes (strain ATCC 55618 / DSM 22257 / CCUG 43843 / 130Z)).